The following is a 258-amino-acid chain: MQVLVVSPPLIAAASLSKPLNSLSKAALSFSRAKPICPFPQTSRRPISVYKSPMNNLFNRLGFGSRPQAQADPSSAAIAQGPDDDVPSSGQQFAQFGAGCFWGVELAYQRVPGVTKTEVGYSHGIVHNPSYEDVCTGTTGHNEVVRVQYDPKECSFESLLDVFWNRHDPTTLNRQGGDVGTQYRSGIYYYTDEQERIAREAVEKQQKILNKRIVTEILPATKFYRAENYHQQYLAKGGRMGLRQSAEKGCKDPIRCYG.

The N-terminal 53 residues, 1 to 53, are a transit peptide targeting the chloroplast; it reads MQVLVVSPPLIAAASLSKPLNSLSKAALSFSRAKPICPFPQTSRRPISVYKSP. Met-54 carries the N-acetylmethionine modification. Positions 62–89 are disordered; it reads GFGSRPQAQADPSSAAIAQGPDDDVPSS. At Ser-245 the chain carries Phosphoserine.

It belongs to the MsrA Met sulfoxide reductase family. Expressed in rosette and cauline leaves, and at lower levels in stems and flowers (at protein level).

It localises to the plastid. It is found in the chloroplast stroma. The catalysed reaction is L-methionyl-[protein] + [thioredoxin]-disulfide + H2O = L-methionyl-(S)-S-oxide-[protein] + [thioredoxin]-dithiol. The enzyme catalyses [thioredoxin]-disulfide + L-methionine + H2O = L-methionine (S)-S-oxide + [thioredoxin]-dithiol. Catalyzes the reduction of methionine sulfoxide (MetSO) to methionine in proteins. Plays a protective role against oxidative stress by restoring activity to proteins that have been inactivated by methionine oxidation. Prevents the methionine sulfoxidation of the heat shock protein HSP21 and its subsequent inactivation. MSRA family specifically reduces the MetSO S-enantiomer. In Arabidopsis thaliana (Mouse-ear cress), this protein is Peptide methionine sulfoxide reductase A4, chloroplastic (MSR4).